A 262-amino-acid chain; its full sequence is Sulfur carrier protein FdhD (262 aa).

The Cysteine persulfide intermediate role is filled by Cys105. 246 to 251 (FVRKNR) contacts Mo-bis(molybdopterin guanine dinucleotide).

This sequence belongs to the FdhD family.

The protein localises to the cytoplasm. Its function is as follows. Required for formate dehydrogenase (FDH) activity. Acts as a sulfur carrier protein that transfers sulfur from IscS to the molybdenum cofactor prior to its insertion into FDH. The chain is Sulfur carrier protein FdhD from Picrophilus torridus (strain ATCC 700027 / DSM 9790 / JCM 10055 / NBRC 100828 / KAW 2/3).